Reading from the N-terminus, the 868-residue chain is Monofunctional pimaradiene synthase (868 aa).

Mg(2+) is bound by residues Asp620, Asp624, Asn764, Thr768, and Glu772.

It belongs to the terpene synthase family. Tpsd subfamily. It depends on Mg(2+) as a cofactor.

It catalyses the reaction (+)-copalyl diphosphate = (-)-pimara-8(14),15-diene + diphosphate. The protein operates within terpene metabolism; oleoresin biosynthesis. Its function is as follows. Involved in defensive oleoresin formation in conifers in response to insect attack or other injury. Involved in diterpene (C20) olefins biosynthesis. Monofunctional enzyme lacking the DXDD motif in the class II active site relevant for the cyclization of geranylgeranyl diphosphate (GGPP). Requires (+)-copalyl diphosphate ((+)-CPP) as substrate, but no activity with GGPP or ent-CPP. Pimaradiene is the major products of the enzyme. This is Monofunctional pimaradiene synthase from Pinus contorta (Shore pine).